The primary structure comprises 73 residues: uncharacterized protein (73 aa).

The N-terminal stretch at 1-22 is a signal peptide; the sequence is MKILGVTGFILICLLAISVLMD. The chain crosses the membrane as a helical span at residues 44 to 66; the sequence is TFAEWVVLLFFVLVLVREMYVIY.

The protein localises to the membrane. This is an uncharacterized protein from Bacillus subtilis (strain 168).